Here is a 147-residue protein sequence, read N- to C-terminus: Leghemoglobin 3 (147 aa).

The region spanning 2–147 is the Globin domain; the sequence is GFTAQQEALV…LATAIKKAMG (146 aa). Tyrosine 30 is subject to Nitrated tyrosine. Serine 45 is a binding site for heme b. The residue at position 45 (serine 45) is a Phosphoserine. Histidine 61 is an O2 binding site. Heme b-binding residues include lysine 64, histidine 93, and lysine 96. At tyrosine 135 the chain carries Nitrated tyrosine.

The protein belongs to the plant globin family. In terms of assembly, monomer. Post-translationally, nitrated in effective nodules and particularly in hypoxic conditions; this mechanism may play a protective role in the symbiosis by buffering toxic peroxynitrite NO(2)(-). Nitration level decrease during nodule senescence. Phosphorylation at Ser-45 disrupts the molecular environment of its porphyrin ring oxygen binding pocket, thus leading to a reduced oxygen consumption and to the delivery of oxygen O(2) to symbiosomes. Specifically and strongly expressed in root nodules and at low levels in seedlings.

Its subcellular location is the cytoplasm. It localises to the cytosol. The protein resides in the nucleus. Functionally, leghemoglobin that reversibly binds oxygen O(2) through a pentacoordinated heme iron. In root nodules, facilitates the diffusion of oxygen to the bacteroids while preventing the bacterial nitrogenase from being inactivated by buffering dioxygen, nitric oxide and carbon monoxide, and promoting the formation of reactive oxygen species (ROS, e.g. H(2)O(2)). This role is essential for symbiotic nitrogen fixation (SNF). The chain is Leghemoglobin 3 from Lotus japonicus (Lotus corniculatus var. japonicus).